The sequence spans 307 residues: Cytochrome f (307 aa).

The signal sequence occupies residues 1-24; sequence MKKNLFLVSVFASLFVGTANNALA. Y25, C45, C48, and H49 together coordinate heme. A helical transmembrane segment spans residues 273–293; it reads LQGLVIFLGFVLIAQVFLVLK.

The protein belongs to the cytochrome f family. As to quaternary structure, the 4 large subunits of the cytochrome b6-f complex are cytochrome b6, subunit IV (17 kDa polypeptide, petD), cytochrome f and the Rieske protein, while the 4 small subunits are PetG, PetL, PetM and PetN. The complex functions as a dimer. Heme serves as cofactor.

It is found in the plastid. The protein localises to the chloroplast thylakoid membrane. In terms of biological role, component of the cytochrome b6-f complex, which mediates electron transfer between photosystem II (PSII) and photosystem I (PSI), cyclic electron flow around PSI, and state transitions. This Ostreococcus tauri protein is Cytochrome f.